The sequence spans 836 residues: Serine/threonine-protein kinase 1 (836 aa).

Residues 1-12 (MDHNSPKSRRSR) show a composition bias toward basic residues. A disordered region spans residues 1-244 (MDHNSPKSRR…SLPDSITRED (244 aa)). A compositionally biased stretch (basic and acidic residues) spans 28–40 (SDSDSDQGRDRDK). Composition is skewed to acidic residues over residues 64–75 (DGEGEEDDDDDS), 95–105 (DYDDDDGDESG), and 145–163 (EESSDEEDEEEDDDDDDGD). Residues 224 to 238 (MQQQNSKMSTTSLPD) show a composition bias toward polar residues. A Protein kinase domain is found at 249–503 (YEFLNELGKG…AAEMLKHKFV (255 aa)). ATP is bound by residues 255–263 (LGKGSYGSV) and Lys-278. The active-site Proton acceptor is Asp-371. Disordered regions lie at residues 539 to 571 (LEDTSTLGPKSSEELGITVPSKPPQNSTEAPLT), 600 to 640 (EDET…DSWI), and 760 to 780 (TSSDPQSKKGRRGQNEMPLPP). The span at 562 to 571 (PQNSTEAPLT) shows a compositional bias: polar residues. Residues 606–618 (SDSRSQLVREKES) show a composition bias toward basic and acidic residues.

It belongs to the protein kinase superfamily. STE Ser/Thr protein kinase family. STE20 subfamily. As to quaternary structure, interacts with MOB1A and MOB1B via its N-terminal region at the plasma membrane and in the nucleus. Binds to BIK1 to phosphorylate and stabilize it. Interacts with and phosphorylates RBOHD upon flagellin perception to activate it. Requires Mn(2+) as cofactor. Autophosphorylates. In terms of tissue distribution, mostly expressed in mature tissues of roots, shoots, hypocotyls, cotyledons, stems, leaves and flowers, as well as in the shoot apical meristem (SAM).

It localises to the cell membrane. The protein resides in the nucleus. Its subcellular location is the golgi apparatus. It is found in the trans-Golgi network. The protein localises to the early endosome. The catalysed reaction is L-seryl-[protein] + ATP = O-phospho-L-seryl-[protein] + ADP + H(+). It catalyses the reaction L-threonyl-[protein] + ATP = O-phospho-L-threonyl-[protein] + ADP + H(+). Functionally, serine/threonine-protein kinase. Regulates organ size in coordination with MOB1A by modulating cell proliferation and cell expansion, possibly by facilitating cell cycle exit. Positive regulator of the pathogen-associated molecular pattern (PAMP, e.g. flg22)-triggered immunity (PTI) signaling by stabilizing BIK1 and activating RBOHD by phosphorylation to promote the extracellular reactive oxygen species (ROS) burst involved in defense responses to bacterial infection. The sequence is that of Serine/threonine-protein kinase 1 from Arabidopsis thaliana (Mouse-ear cress).